An 872-amino-acid chain; its full sequence is Alanine--tRNA ligase (872 aa).

Residues H567, H571, C669, and H673 each contribute to the Zn(2+) site.

This sequence belongs to the class-II aminoacyl-tRNA synthetase family. Zn(2+) serves as cofactor.

The protein resides in the cytoplasm. It catalyses the reaction tRNA(Ala) + L-alanine + ATP = L-alanyl-tRNA(Ala) + AMP + diphosphate. Its function is as follows. Catalyzes the attachment of alanine to tRNA(Ala) in a two-step reaction: alanine is first activated by ATP to form Ala-AMP and then transferred to the acceptor end of tRNA(Ala). Also edits incorrectly charged Ser-tRNA(Ala) and Gly-tRNA(Ala) via its editing domain. This is Alanine--tRNA ligase from Streptococcus pyogenes serotype M6 (strain ATCC BAA-946 / MGAS10394).